The primary structure comprises 477 residues: Cysteine protease ATG4b (477 aa).

Positions 11-39 (SKCSSSSTSEKRDISSPTSLVSDSASSDN) are disordered. The span at 25-39 (SSPTSLVSDSASSDN) shows a compositional bias: polar residues. The active-site Nucleophile is the cysteine 173. Active-site residues include aspartate 368 and histidine 370. The tract at residues 453 to 477 (AETSSSTETSTEISGEEHEDDWQLL) is disordered. Residues 454–465 (ETSSSTETSTEI) are compositionally biased toward low complexity.

Belongs to the peptidase C54 family. Interacts with ATG8a and ATG8d. Constitutively expressed.

Its subcellular location is the cytoplasm. It carries out the reaction [protein]-C-terminal L-amino acid-glycyl-phosphatidylethanolamide + H2O = [protein]-C-terminal L-amino acid-glycine + a 1,2-diacyl-sn-glycero-3-phosphoethanolamine. In terms of biological role, cysteine protease that plays a key role in autophagy by mediating both proteolytic activation and delipidation of ATG8 family proteins. The protease activity is required for proteolytic activation of ATG8 family proteins: cleaves the C-terminal amino acid of ATG8 proteins to reveal a C-terminal glycine. Exposure of the glycine at the C-terminus is essential for ATG8 proteins conjugation to phosphatidylethanolamine (PE) and insertion to membranes, which is necessary for autophagy. In addition to the protease activity, also mediates delipidation of PE-conjugated ATG8 proteins. The chain is Cysteine protease ATG4b from Arabidopsis thaliana (Mouse-ear cress).